The chain runs to 477 residues: Protoporphyrinogen oxidase (477 aa).

Residues 9–14 (GGGISG), Trp-42, 57–60 (GPRG), Val-257, Ala-449, and 454–456 (VAV) each bind FAD.

Belongs to the protoporphyrinogen/coproporphyrinogen oxidase family. Protoporphyrinogen oxidase subfamily. As to quaternary structure, monomer. Homodimer. FAD serves as cofactor. Detected in liver (at protein level).

It localises to the mitochondrion inner membrane. It carries out the reaction protoporphyrinogen IX + 3 O2 = protoporphyrin IX + 3 H2O2. The protein operates within porphyrin-containing compound metabolism; protoporphyrin-IX biosynthesis; protoporphyrin-IX from protoporphyrinogen-IX: step 1/1. In terms of biological role, catalyzes the 6-electron oxidation of protoporphyrinogen-IX to form protoporphyrin-IX. This chain is Protoporphyrinogen oxidase (PPOX), found in Bos taurus (Bovine).